A 436-amino-acid chain; its full sequence is N-lysine methyltransferase SMYD2 (436 aa).

One can recognise an SET domain in the interval 10-244 (GGLERFASPG…PGEEVFTSYI (235 aa)). An S-adenosyl-L-methionine-binding site is contributed by 20–22 (KGR). Residues Cys55, Cys58, Cys68, Cys71, Cys77, Cys81, His89, and Cys93 each coordinate Zn(2+). An MYND-type zinc finger spans residues 55–93 (CDGCFARKEGLSKCGRCKQAFYCNVECQKEDWPMHKLEC). S-adenosyl-L-methionine is bound by residues His140, 209-210 (NH), and 261-263 (YFF).

It belongs to the class V-like SAM-binding methyltransferase superfamily.

The protein resides in the cytoplasm. It localises to the cytosol. The protein localises to the nucleus. It catalyses the reaction L-lysyl(4)-[histone H3] + 3 S-adenosyl-L-methionine = N(6),N(6),N(6)-trimethyl-L-lysyl(4)-[histone H3] + 3 S-adenosyl-L-homocysteine + 3 H(+). The enzyme catalyses L-lysyl-[protein] + S-adenosyl-L-methionine = N(6)-methyl-L-lysyl-[protein] + S-adenosyl-L-homocysteine + H(+). Protein-lysine N-methyltransferase that methylates both histones and non-histone proteins, including p53/TP53 and RB1. Specifically trimethylates histone H3 'Lys-4' (H3K4me3) in vivo. The activity requires interaction with HSP90alpha. Shows even higher methyltransferase activity on p53/TP53. Monomethylates 'Lys-370' of p53/TP53, leading to decreased DNA-binding activity and subsequent transcriptional regulation activity of p53/TP53. Monomethylates RB1 at 'Lys-860'. This Gallus gallus (Chicken) protein is N-lysine methyltransferase SMYD2 (SMYD2).